A 428-amino-acid chain; its full sequence is MLDLDTVRNDPRRVKEALRAKGIGSPDLVDTLLEIDETRRSAITELQDVQSRQNELSQQIGALKREGKDEEAEAIIEKTGRMKEKINRLKEEVQEAEARQEELVLELPNIPHPSVPVGADEDDNEVEATVGEMPAFDFDPAPHWELADRHNLVDLERGAKVAGSGFPFYLGKGARLQRALLNFFLDRARERGYTEMQAPLFVNPESAKGTGQIPDKDALMYEIPRDDFYPIPTAEVPVTNFHRDEILAADDLPRRYCTYSPCWRREAGSYGSDVRGLNRLHQFDKVELVRIVPPDESYRALDALLEDAESALDALDLPYRRLLMCTGDMGFTQAKVYDLEVWSAAQERWLEVSSVSNFEAFQARRAQIRYRLEPEAKPELVHTLNGSGLAFPRIVAALLENNQQPDGSIELPEALHPYTGFARIGAEA.

233-235 (TAE) is a binding site for L-serine. 264–266 (RRE) is an ATP binding site. Glu287 is a binding site for L-serine. 351 to 354 (EVSS) provides a ligand contact to ATP. Residue Ser387 coordinates L-serine.

The protein belongs to the class-II aminoacyl-tRNA synthetase family. Type-1 seryl-tRNA synthetase subfamily. In terms of assembly, homodimer. The tRNA molecule binds across the dimer.

Its subcellular location is the cytoplasm. It carries out the reaction tRNA(Ser) + L-serine + ATP = L-seryl-tRNA(Ser) + AMP + diphosphate + H(+). It catalyses the reaction tRNA(Sec) + L-serine + ATP = L-seryl-tRNA(Sec) + AMP + diphosphate + H(+). It functions in the pathway aminoacyl-tRNA biosynthesis; selenocysteinyl-tRNA(Sec) biosynthesis; L-seryl-tRNA(Sec) from L-serine and tRNA(Sec): step 1/1. In terms of biological role, catalyzes the attachment of serine to tRNA(Ser). Is also able to aminoacylate tRNA(Sec) with serine, to form the misacylated tRNA L-seryl-tRNA(Sec), which will be further converted into selenocysteinyl-tRNA(Sec). This is Serine--tRNA ligase from Salinibacter ruber (strain DSM 13855 / M31).